The sequence spans 326 residues: Beta-ketoacyl-[acyl-carrier-protein] synthase III (326 aa).

Active-site residues include Cys-112 and His-251. Residues 252–256 (QANSR) form an ACP-binding region. Asn-281 is a catalytic residue.

The protein belongs to the thiolase-like superfamily. FabH family. As to quaternary structure, homodimer.

It localises to the cytoplasm. The enzyme catalyses malonyl-[ACP] + acetyl-CoA + H(+) = 3-oxobutanoyl-[ACP] + CO2 + CoA. It functions in the pathway lipid metabolism; fatty acid biosynthesis. Catalyzes the condensation reaction of fatty acid synthesis by the addition to an acyl acceptor of two carbons from malonyl-ACP. Catalyzes the first condensation reaction which initiates fatty acid synthesis and may therefore play a role in governing the total rate of fatty acid production. Possesses both acetoacetyl-ACP synthase and acetyl transacylase activities. Its substrate specificity determines the biosynthesis of branched-chain and/or straight-chain of fatty acids. This Clostridium botulinum (strain Loch Maree / Type A3) protein is Beta-ketoacyl-[acyl-carrier-protein] synthase III.